The sequence spans 307 residues: 4-diphosphocytidyl-2-C-methyl-D-erythritol kinase (307 aa).

K9 is an active-site residue. ATP is bound at residue 94–104; the sequence is PIGAGLAGGSS. D136 is an active-site residue.

This sequence belongs to the GHMP kinase family. IspE subfamily.

It catalyses the reaction 4-CDP-2-C-methyl-D-erythritol + ATP = 4-CDP-2-C-methyl-D-erythritol 2-phosphate + ADP + H(+). The protein operates within isoprenoid biosynthesis; isopentenyl diphosphate biosynthesis via DXP pathway; isopentenyl diphosphate from 1-deoxy-D-xylulose 5-phosphate: step 3/6. Functionally, catalyzes the phosphorylation of the position 2 hydroxy group of 4-diphosphocytidyl-2C-methyl-D-erythritol. This chain is 4-diphosphocytidyl-2-C-methyl-D-erythritol kinase, found in Synechococcus sp. (strain CC9605).